A 461-amino-acid chain; its full sequence is MLKIFNTLSRQKEEFKPIHPGKVGMYVCGITIYDLCHIGHGRTFVSFDVVARYLRYLGYDLTYVRNVTDVDDKIIKRAAENSESCDDLTGRMLAEMYKDFDALNILRPDLEPRATRHIQEIIALTESLIKRGHAYVADNGDVMFSVESDQDYGLLSRQDLSQLQAGARVEVADVKRNPMDFVLWKMSKPGEPSWESPWGAGRPGWHIECSAMNSKQLGNHFDIHGGGADLMFPHHENEIAQSTCAHDGPYVNYWMHSGMVMVDKEKMSKSLNNFFTIRDVLAYYDAETVRYFLLSGHYRSQLNYTEDNLKQARTALERFYTALRGTDASVPPAGGEIFEARFIDAMNDDFNTPEAYSVLFDMVREINRLKSEDMDAANGLAAELRKLAGILGLLQQQPEQFLHRGIQADDEEIAKIEALIKQRNDARKNKDWPLADSARNQLNEMGIELEDGPQGTSWRRK.

Cysteine 28 is a binding site for Zn(2+). Positions isoleucine 30–histidine 40 match the 'HIGH' region motif. Positions 209, 234, and 238 each coordinate Zn(2+). The 'KMSKS' region motif lies at lysine 266 to serine 270. An ATP-binding site is contributed by lysine 269.

The protein belongs to the class-I aminoacyl-tRNA synthetase family. As to quaternary structure, monomer. Zn(2+) serves as cofactor.

It localises to the cytoplasm. It catalyses the reaction tRNA(Cys) + L-cysteine + ATP = L-cysteinyl-tRNA(Cys) + AMP + diphosphate. The sequence is that of Cysteine--tRNA ligase from Photorhabdus laumondii subsp. laumondii (strain DSM 15139 / CIP 105565 / TT01) (Photorhabdus luminescens subsp. laumondii).